A 279-amino-acid chain; its full sequence is NLP effector protein 9 (279 aa).

Positions 1–19 (MKISNLLGVLVVFLAVVKG) are cleaved as a signal peptide. A Conserved undecapeptide motif motif is present at residues 151 to 161 (AIMYAWYFPDI). The N-linked (GlcNAc...) asparagine glycan is linked to Asn-176.

This sequence belongs to the Necrosis inducing protein (NPP1) family.

The protein localises to the secreted. In terms of biological role, secreted effector that acts as a pathogen-associated molecular pattern (PAMP) recognized by the plant immune system. Seems not to induce necrosis in Nicotiana benthamiana leaves. The polypeptide is NLP effector protein 9 (Plasmopara viticola (Downy mildew of grapevine)).